The primary structure comprises 141 residues: MAKKVANVVKLQIPAGAATPAPPVGPALGQAGINIMGFTKEFNARTADQKGMLIPVVITVYEDRSFDFITKTPPAAVLLKKAAGVEHGSGEPNTNKVATVTKDQVKEIAETKMQDLNAADVEAAMRMIEGTARSMGFVVEG.

Belongs to the universal ribosomal protein uL11 family. In terms of assembly, part of the ribosomal stalk of the 50S ribosomal subunit. Interacts with L10 and the large rRNA to form the base of the stalk. L10 forms an elongated spine to which L12 dimers bind in a sequential fashion forming a multimeric L10(L12)X complex. In terms of processing, one or more lysine residues are methylated.

Its function is as follows. Forms part of the ribosomal stalk which helps the ribosome interact with GTP-bound translation factors. The chain is Large ribosomal subunit protein uL11 from Limosilactobacillus fermentum (strain NBRC 3956 / LMG 18251) (Lactobacillus fermentum).